The sequence spans 335 residues: Beta-hexosaminidase (335 aa).

Substrate contacts are provided by residues D60, R68, R133, and 163 to 164 (KH). The active-site Proton donor/acceptor is the H176. The active-site Nucleophile is the D247.

This sequence belongs to the glycosyl hydrolase 3 family. NagZ subfamily.

The protein resides in the cytoplasm. The catalysed reaction is Hydrolysis of terminal non-reducing N-acetyl-D-hexosamine residues in N-acetyl-beta-D-hexosaminides.. Its pathway is cell wall biogenesis; peptidoglycan recycling. Plays a role in peptidoglycan recycling by cleaving the terminal beta-1,4-linked N-acetylglucosamine (GlcNAc) from peptide-linked peptidoglycan fragments, giving rise to free GlcNAc, anhydro-N-acetylmuramic acid and anhydro-N-acetylmuramic acid-linked peptides. The protein is Beta-hexosaminidase of Xylella fastidiosa (strain M12).